Consider the following 253-residue polypeptide: 5'-nucleotidase SurE (253 aa).

Aspartate 8, aspartate 9, serine 40, and asparagine 93 together coordinate a divalent metal cation.

The protein belongs to the SurE nucleotidase family. Requires a divalent metal cation as cofactor.

The protein resides in the cytoplasm. The enzyme catalyses a ribonucleoside 5'-phosphate + H2O = a ribonucleoside + phosphate. Nucleotidase that shows phosphatase activity on nucleoside 5'-monophosphates. This Methylobacterium sp. (strain 4-46) protein is 5'-nucleotidase SurE.